We begin with the raw amino-acid sequence, 486 residues long: Cardiolipin synthase A (486 aa).

2 helical membrane-spanning segments follow: residues 3–23 (IFYDLIKWLVVLIYWLLIANI) and 38–58 (MSWLLTIYIIPFIGIAIWFFF). 2 consecutive PLD phosphodiesterase domains span residues 219-246 (LDVRQHRKIILIDNYISYSGSMNLVDPY) and 399-426 (KKGLLHSKSILIDQQLSLIGTVNLDMRS). Catalysis depends on residues histidine 224, lysine 226, aspartate 231, histidine 404, lysine 406, and aspartate 411.

It belongs to the phospholipase D family. Cardiolipin synthase subfamily. ClsA sub-subfamily.

It is found in the cell inner membrane. The enzyme catalyses 2 a 1,2-diacyl-sn-glycero-3-phospho-(1'-sn-glycerol) = a cardiolipin + glycerol. Catalyzes the reversible phosphatidyl group transfer from one phosphatidylglycerol molecule to another to form cardiolipin (CL) (diphosphatidylglycerol) and glycerol. This is Cardiolipin synthase A from Buchnera aphidicola subsp. Schizaphis graminum (strain Sg).